Here is a 433-residue protein sequence, read N- to C-terminus: 3-phosphoshikimate 1-carboxyvinyltransferase (433 aa).

3-phosphoshikimate is bound by residues Lys-22, Ser-23, and Arg-27. Lys-22 lines the phosphoenolpyruvate pocket. Phosphoenolpyruvate is bound by residues Gly-95 and Arg-123. Ser-167, Gln-169, Asp-315, and Lys-342 together coordinate 3-phosphoshikimate. Residue Gln-169 participates in phosphoenolpyruvate binding. Catalysis depends on Asp-315, which acts as the Proton acceptor. Residues Arg-346 and Arg-387 each contribute to the phosphoenolpyruvate site.

The protein belongs to the EPSP synthase family. Monomer.

Its subcellular location is the cytoplasm. It carries out the reaction 3-phosphoshikimate + phosphoenolpyruvate = 5-O-(1-carboxyvinyl)-3-phosphoshikimate + phosphate. It functions in the pathway metabolic intermediate biosynthesis; chorismate biosynthesis; chorismate from D-erythrose 4-phosphate and phosphoenolpyruvate: step 6/7. In terms of biological role, catalyzes the transfer of the enolpyruvyl moiety of phosphoenolpyruvate (PEP) to the 5-hydroxyl of shikimate-3-phosphate (S3P) to produce enolpyruvyl shikimate-3-phosphate and inorganic phosphate. The protein is 3-phosphoshikimate 1-carboxyvinyltransferase of Legionella pneumophila (strain Lens).